Consider the following 1046-residue polypeptide: Suppressor of Mek1 (1046 aa).

Residues 1-101 enclose the WH1 domain; the sequence is MEPLRKRVKV…QDIWENILQY (101 aa). The tract at residues 626–1046 is disordered; the sequence is FESPETSCNN…SSPTPSELHV (421 aa). Positions 665-689 are enriched in acidic residues; sequence IDEEEEEAYFNRDDDSEDSDDEDEL. Low complexity predominate over residues 695–713; that stretch reads NNNNNNNNNNKQICTNNEN. Residues 714–727 show a composition bias toward basic and acidic residues; sequence NMEKNDDNIEKDNE. A compositionally biased stretch (acidic residues) spans 743 to 752; it reads YEDEDDEDDE. Residues 753 to 783 show a composition bias toward basic and acidic residues; it reads INKSVESDDIVEKHEIIDKNEKKDEIMKENN. Over residues 784-803 the composition is skewed to acidic residues; it reads DSDNDDNDNNDNDNDNDNNS. Positions 804-820 are enriched in low complexity; the sequence is DIENKNHLNNNGNNENN. 2 stretches are compositionally biased toward basic and acidic residues: residues 826–855 and 862–876; these read VQDKSNNKNNSDKINEDEKIEKQDEMKENL and EKVKEKQPKDIKKEN. Residues 889-905 show a composition bias toward low complexity; it reads SNNSNNNNNNNNNNSNN. The span at 909–935 shows a compositional bias: basic and acidic residues; that stretch reads GDNRKTTPKRKLDYEKNESVVSKKIDK. Low complexity predominate over residues 958 to 995; sequence NNNNSNNNNNNNNNNNNNNNNNNNNNNNNNNNNNNNQN. The span at 996-1011 shows a compositional bias: acidic residues; the sequence is DENELSSASEEEEEQL. A Nuclear localization signal motif is present at residues 1003–1022; that stretch reads ASEEEEEQLENGKHIKKFKR. The segment covering 1028–1038 has biased composition (low complexity); that stretch reads NNSSNNSNNSS.

Belongs to the SMEK family. Interacts with ppp4c.

It localises to the cytoplasm. The protein localises to the cell cortex. Its subcellular location is the nucleus. Suppresses MEK1 null cell polarity, chemotaxis, and gene expression defects. Required for proper cytokinesis during vegetative growth, timely exit from the mound stage during development, and myosin II assembly. May be a regulatory subunit of serine/threonine-protein phosphatase 4 (PP4) and may control localization of PP4 to the nucleus. Involved in the regulation of some ppp4c functions, such as developmental progression, chemotaxis, expression of stress response genes and cell movement. This Dictyostelium discoideum (Social amoeba) protein is Suppressor of Mek1 (smkA).